Consider the following 279-residue polypeptide: uncharacterized protein (279 aa).

A run of 6 helical transmembrane segments spans residues 29–49, 77–97, 105–125, 147–167, 186–206, and 240–260; these read PYNMIAGAIGAVVLTILALVF, VLYALAPLIPLVILVIGGTSL, WTKMGVPQAMLIGAIYGIIVT, VLGIIIAASVFVAGLKSTGAV, TIGPFLMGLITGSGDAAAIAF, and PIAGVTIVCAGLAMVSPVEMV.

It belongs to the DcuC/DcuD transporter (TC 2.A.61) family.

It is found in the cell membrane. This is an uncharacterized protein from Haemophilus influenzae (strain ATCC 51907 / DSM 11121 / KW20 / Rd).